A 474-amino-acid polypeptide reads, in one-letter code: ATP synthase subunit beta 2 (474 aa).

151–158 (GGAGVGKT) is a binding site for ATP.

It belongs to the ATPase alpha/beta chains family. F-type ATPases have 2 components, CF(1) - the catalytic core - and CF(0) - the membrane proton channel. CF(1) has five subunits: alpha(3), beta(3), gamma(1), delta(1), epsilon(1). CF(0) has four main subunits: a(1), b(1), b'(1) and c(9-12).

It is found in the cell inner membrane. It catalyses the reaction ATP + H2O + 4 H(+)(in) = ADP + phosphate + 5 H(+)(out). Its function is as follows. Produces ATP from ADP in the presence of a proton gradient across the membrane. The catalytic sites are hosted primarily by the beta subunits. The polypeptide is ATP synthase subunit beta 2 (Dinoroseobacter shibae (strain DSM 16493 / NCIMB 14021 / DFL 12)).